We begin with the raw amino-acid sequence, 335 residues long: Methionine import ATP-binding protein MetN (335 aa).

The region spanning 2-241 (IQFQRLHKSY…PKHATTRRFV (240 aa)) is the ABC transporter domain. Residue 38–45 (GHSGAGKS) participates in ATP binding.

Belongs to the ABC transporter superfamily. Methionine importer (TC 3.A.1.24) family. The complex is composed of two ATP-binding proteins (MetN), two transmembrane proteins (MetI) and a solute-binding protein (MetQ).

It localises to the cell inner membrane. The catalysed reaction is L-methionine(out) + ATP + H2O = L-methionine(in) + ADP + phosphate + H(+). The enzyme catalyses D-methionine(out) + ATP + H2O = D-methionine(in) + ADP + phosphate + H(+). Functionally, part of the ABC transporter complex MetNIQ involved in methionine import. Responsible for energy coupling to the transport system. The sequence is that of Methionine import ATP-binding protein MetN from Xanthomonas euvesicatoria pv. vesicatoria (strain 85-10) (Xanthomonas campestris pv. vesicatoria).